The primary structure comprises 466 residues: UDP-N-acetylmuramoylalanine--D-glutamate ligase (466 aa).

Position 122–128 (122–128 (GTNGKTT)) interacts with ATP.

The protein belongs to the MurCDEF family.

It is found in the cytoplasm. The enzyme catalyses UDP-N-acetyl-alpha-D-muramoyl-L-alanine + D-glutamate + ATP = UDP-N-acetyl-alpha-D-muramoyl-L-alanyl-D-glutamate + ADP + phosphate + H(+). It functions in the pathway cell wall biogenesis; peptidoglycan biosynthesis. Cell wall formation. Catalyzes the addition of glutamate to the nucleotide precursor UDP-N-acetylmuramoyl-L-alanine (UMA). This chain is UDP-N-acetylmuramoylalanine--D-glutamate ligase, found in Aromatoleum aromaticum (strain DSM 19018 / LMG 30748 / EbN1) (Azoarcus sp. (strain EbN1)).